Consider the following 403-residue polypeptide: Dual-specificity RNA methyltransferase RlmN (403 aa).

The active-site Proton acceptor is Glu-126. The Radical SAM core domain occupies 132-375 (ETDRGTLCVS…VRTPRGRDIL (244 aa)). A disulfide bridge connects residues Cys-139 and Cys-378. Positions 146, 150, and 153 each coordinate [4Fe-4S] cluster. Residues 204-205 (GE), Ser-236, 258-260 (SLH), and Asn-335 contribute to the S-adenosyl-L-methionine site. Catalysis depends on Cys-378, which acts as the S-methylcysteine intermediate.

It belongs to the radical SAM superfamily. RlmN family. Requires [4Fe-4S] cluster as cofactor.

The protein localises to the cytoplasm. The catalysed reaction is adenosine(2503) in 23S rRNA + 2 reduced [2Fe-2S]-[ferredoxin] + 2 S-adenosyl-L-methionine = 2-methyladenosine(2503) in 23S rRNA + 5'-deoxyadenosine + L-methionine + 2 oxidized [2Fe-2S]-[ferredoxin] + S-adenosyl-L-homocysteine. It carries out the reaction adenosine(37) in tRNA + 2 reduced [2Fe-2S]-[ferredoxin] + 2 S-adenosyl-L-methionine = 2-methyladenosine(37) in tRNA + 5'-deoxyadenosine + L-methionine + 2 oxidized [2Fe-2S]-[ferredoxin] + S-adenosyl-L-homocysteine. Its function is as follows. Specifically methylates position 2 of adenine 2503 in 23S rRNA and position 2 of adenine 37 in tRNAs. m2A2503 modification seems to play a crucial role in the proofreading step occurring at the peptidyl transferase center and thus would serve to optimize ribosomal fidelity. The chain is Dual-specificity RNA methyltransferase RlmN from Bradyrhizobium sp. (strain BTAi1 / ATCC BAA-1182).